Consider the following 508-residue polypeptide: Endo-4-O-sulfatase (508 aa).

Serine 84 is subject to 3-oxoalanine (Ser).

Belongs to the sulfatase family. The conversion to 3-oxoalanine (also known as C-formylglycine, FGly), of a serine or cysteine residue in prokaryotes and of a cysteine residue in eukaryotes, is critical for catalytic activity.

Functionally, endosulfatase involved in the degradation of the glycosaminoglycans (GAGs) chondroitin sulfate (CS) and dermatan sulfate (DS). Efficiently hydrolyzes sulfate groups from a broad range of substrate size, including disaccharide to high molecular weight CS and DS polymers. Has a strict specificity for the 4-O-sulfate groups of galactosamine. GAG-specific sulfatases play a key role in the persistence of the major human gut symbiont B.thetaiotaomicron in the host gastrointestinal tract. This chain is Endo-4-O-sulfatase, found in Bacteroides thetaiotaomicron (strain ATCC 29148 / DSM 2079 / JCM 5827 / CCUG 10774 / NCTC 10582 / VPI-5482 / E50).